A 544-amino-acid chain; its full sequence is Chromatin assembly factor 1 subunit A (544 aa).

Polar residues predominate over residues 1–22; that stretch reads MNSESVDSDVAASTSNKGNELC. 3 disordered regions span residues 1 to 52, 67 to 117, and 138 to 160; these read MNSE…EADE, IYNG…REQE, and QEQQ…AQRL. The span at 23-35 shows a compositional bias: low complexity; sequence SSSTDITSLSVSS. Residues 36–47 show a composition bias toward polar residues; it reads PNESVIHSSHSA. An interaction with DNA and pcn1/PCNA region spans residues 56 to 170; sequence KLSYEGNRKK…RQEQILNKER (115 aa). Basic and acidic residues predominate over residues 74 to 117; sequence AGKEKKLQKQRAQEERIRQKEAERLKREKERQQREQEKKLREQE. A coiled-coil region spans residues 76–176; the sequence is KEKKLQKQRA…NKERQQLKLN (101 aa). The PCNA-interaction protein (PIP box) signature appears at 172–179; it reads QLKLNNFF. Positions 325-396 are interaction with histones H3/H4; that stretch reads SNVLLNPWLE…DKDSVNASNT (72 aa). Residues 351–388 show a composition bias toward acidic residues; it reads DEEDDGEDLESEDEEVDNSDDIVEDGDNAFVDDEDDDK. The disordered stretch occupies residues 351 to 400; it reads DEEDDGEDLESEDEEVDNSDDIVEDGDNAFVDDEDDDKDSVNASNTHRSS.

This sequence belongs to the RLF2 family. As to quaternary structure, component of chromatin assembly factor 1 (CAF-1), composed of pcf1, pcf2 and pcf3. Interacts (via PIP motif) with pcn1/PCNA; the interaction is direct and occurs during S-phase. Interacts with swi6 at the G1/S-phase transition and early S-phase, but not in the G2 phase. The CAF-1 complex interacts with histone H3/H4 dimers.

It localises to the nucleus. In terms of biological role, acts as a component of the histone chaperone complex chromatin assembly factor 1 (CAF-1), which assembles histone octamers onto DNA during replication and repair. CAF-1 performs the first step of the nucleosome assembly process, bringing newly synthesized histones H3 and H4 to replicating DNA; histones H2A/H2B can bind to this chromatin precursor subsequent to DNA replication to complete the histone octamer. Plays a role in the maintenance of heterochromatin. This Schizosaccharomyces pombe (strain 972 / ATCC 24843) (Fission yeast) protein is Chromatin assembly factor 1 subunit A.